Consider the following 262-residue polypeptide: Rhomboid-type serine protease 2 (262 aa).

The Cytoplasmic portion of the chain corresponds to 1-16 (MNWKSYVFPGGHPPAA). A helical membrane pass occupies residues 17–37 (LTTGLVVFLTAIYLLSFIFAL). The Lumenal portion of the chain corresponds to 38–57 (REDLSLAPESLFKLQMSRLS). The chain crosses the membrane as a helical span at residues 58–78 (LYPLIHLSLPHLLFNVLAIWA). Residues 79 to 89 (PLNLFEETHGT) lie on the Cytoplasmic side of the membrane. Residues 90–110 (VYTGVFLNLSALFAGILYCLL) form a helical membrane-spanning segment. Over 111-112 (GK) the chain is Lumenal. A helical transmembrane segment spans residues 113–133 (LLYPEALVAGASGWCFTLFAY). The active-site Nucleophile is the S124. At 134 to 151 (YSFKESQIRPRTRIFRTD) the chain is on the cytoplasmic side. Residues 152–168 (YSIPTLYTPLVLLVAIA) traverse the membrane as a helical segment. Residues 169–174 (VVIPGS) are Lumenal-facing. Residues 175–191 (SFWGHFFGLCVGYAIGY) form a helical membrane-spanning segment. H179 is a catalytic residue. Over 192 to 262 (KESWFNKITP…DNSGTVLGTA (71 aa)) the chain is Cytoplasmic. The segment at 243–262 (STETPLPLHNDNSGTVLGTA) is disordered. Residues 252–262 (NDNSGTVLGTA) are compositionally biased toward polar residues.

The protein belongs to the peptidase S54 family. As to quaternary structure, interacts with SNX3.

The protein localises to the golgi apparatus membrane. It is found in the golgi apparatus. The protein resides in the cis-Golgi network membrane. The enzyme catalyses Cleaves type-1 transmembrane domains using a catalytic dyad composed of serine and histidine that are contributed by different transmembrane domains.. Functionally, probable rhomboid-type serine protease that catalyzes intramembrane proteolysis. The sequence is that of Rhomboid-type serine protease 2 (RBD2) from Saccharomyces cerevisiae (strain ATCC 204508 / S288c) (Baker's yeast).